The following is a 151-amino-acid chain: Deoxyuridine 5'-triphosphate nucleotidohydrolase (151 aa).

Substrate contacts are provided by residues 69–71 (RSG), N82, and 86–88 (TID).

Belongs to the dUTPase family. The cofactor is Mg(2+).

It catalyses the reaction dUTP + H2O = dUMP + diphosphate + H(+). The protein operates within pyrimidine metabolism; dUMP biosynthesis; dUMP from dCTP (dUTP route): step 2/2. This enzyme is involved in nucleotide metabolism: it produces dUMP, the immediate precursor of thymidine nucleotides and it decreases the intracellular concentration of dUTP so that uracil cannot be incorporated into DNA. The chain is Deoxyuridine 5'-triphosphate nucleotidohydrolase from Rhodospirillum centenum (strain ATCC 51521 / SW).